Here is a 448-residue protein sequence, read N- to C-terminus: N-succinylarginine dihydrolase (448 aa).

Substrate is bound by residues 19-28, Asn-110, and 137-138; these read GGLSYGNVAS and HR. Residue Glu-174 is part of the active site. Residue Arg-214 coordinates substrate. His-250 is an active-site residue. Residues Asp-252 and Asn-365 each contribute to the substrate site. The active-site Nucleophile is Cys-371.

It belongs to the succinylarginine dihydrolase family. In terms of assembly, homodimer.

The enzyme catalyses N(2)-succinyl-L-arginine + 2 H2O + 2 H(+) = N(2)-succinyl-L-ornithine + 2 NH4(+) + CO2. It participates in amino-acid degradation; L-arginine degradation via AST pathway; L-glutamate and succinate from L-arginine: step 2/5. Its function is as follows. Catalyzes the hydrolysis of N(2)-succinylarginine into N(2)-succinylornithine, ammonia and CO(2). This Pseudomonas fluorescens (strain ATCC BAA-477 / NRRL B-23932 / Pf-5) protein is N-succinylarginine dihydrolase.